The chain runs to 75 residues: UPF0352 protein CKO_00587 (75 aa).

It belongs to the UPF0352 family.

This chain is UPF0352 protein CKO_00587, found in Citrobacter koseri (strain ATCC BAA-895 / CDC 4225-83 / SGSC4696).